The following is a 383-amino-acid chain: uncharacterized protein (383 aa).

4 disordered regions span residues 1–30, 114–144, 262–289, and 341–360; these read MDLCQKNETDLENGENNEIQSTEETEPTCT, ETKPPTEGGPEKDQSSPSQTQAAPQGPSTAS, GEKRPSELAKHTVVNDTPSSPSPAARTS, and AKDPRPPVITQKAKQENSPQ. A compositionally biased stretch (acidic residues) spans 10-26; sequence DLENGENNEIQSTEETE. Residues 128–141 show a composition bias toward low complexity; that stretch reads SSPSQTQAAPQGPS. The segment covering 262–271 has biased composition (basic and acidic residues); that stretch reads GEKRPSELAK.

This is an uncharacterized protein from Macaca fascicularis (Crab-eating macaque).